Reading from the N-terminus, the 810-residue chain is LPS-assembly protein LptD (810 aa).

The N-terminal stretch at 1–29 (MTKRTLGYSYPIALTISLVPALTPAIVQA) is a signal peptide.

It belongs to the LptD family. In terms of assembly, component of the lipopolysaccharide transport and assembly complex. Interacts with LptE and LptA.

The protein resides in the cell outer membrane. In terms of biological role, together with LptE, is involved in the assembly of lipopolysaccharide (LPS) at the surface of the outer membrane. The polypeptide is LPS-assembly protein LptD (Aeromonas hydrophila subsp. hydrophila (strain ATCC 7966 / DSM 30187 / BCRC 13018 / CCUG 14551 / JCM 1027 / KCTC 2358 / NCIMB 9240 / NCTC 8049)).